The following is a 114-amino-acid chain: Fumarate reductase subunit D (114 aa).

3 consecutive transmembrane segments (helical) span residues 25–45 (SGLA…FGII), 50–70 (IIAF…TIFP), and 94–114 (LIFY…VIAI).

The protein belongs to the FrdD family. Part of an enzyme complex containing four subunits: a flavoprotein (FrdA), an iron-sulfur protein (FrdB), and two hydrophobic anchor proteins (FrdC and FrdD).

It is found in the cell inner membrane. In terms of biological role, anchors the catalytic components of the fumarate reductase complex to the cell membrane, binds quinones. This chain is Fumarate reductase subunit D, found in Mannheimia succiniciproducens (strain KCTC 0769BP / MBEL55E).